Consider the following 446-residue polypeptide: MEKYLSVTTLTKYLKMKFDKDPYLERVYLTGQVSNFRKRPTHQYFSLKDDHAVIQATIWSGIYQKLGFDLEEGMKINVIGRVQVYEPSGSYSIIIEKAEPDGVGALAIQFEQLKKKLTEEGLFQERFKQALPQFSKRIGVVTSRSGAVIRDIITTVSRRFPGVDILLYPTKVQGEGAAEEIARNIARANQRDDLDLLIIGRGGGSIEDLWAFNEEIVVRAIFESRLPVISSVGHETDVTLADFVADRRAATPTAAAELATPVTKLDVLAHLQNQEKRMVTAVRNVLSKKQEALKKCSQSVIFRQPERLYDGYLQRLDQLQLRLKQSLRTRISDNKQLVQARTHQLVQLSPVTKIQRYQDRLGQLDKLLGSQMALVYDAKVAEAKRLSEALLMLDTSRIVARGYAIVKKEESVVDSVESLKKKDQVTLLMRDGQVELEVKDVKTKEI.

Belongs to the XseA family. As to quaternary structure, heterooligomer composed of large and small subunits.

It is found in the cytoplasm. The catalysed reaction is Exonucleolytic cleavage in either 5'- to 3'- or 3'- to 5'-direction to yield nucleoside 5'-phosphates.. Its function is as follows. Bidirectionally degrades single-stranded DNA into large acid-insoluble oligonucleotides, which are then degraded further into small acid-soluble oligonucleotides. The protein is Exodeoxyribonuclease 7 large subunit of Streptococcus pneumoniae serotype 4 (strain ATCC BAA-334 / TIGR4).